The sequence spans 259 residues: Protein CWC15 homolog (259 aa).

The segment at methionine 1 to arginine 182 is disordered. Residues aspartate 52 to arginine 71 are compositionally biased toward basic and acidic residues. Low complexity-rich tracts occupy residues serine 72–glycine 82 and glutamine 114–alanine 126. Over residues aspartate 129–alanine 150 the composition is skewed to acidic residues. A coiled-coil region spans residues alanine 150–arginine 182. The segment covering glutamine 157–arginine 182 has biased composition (basic and acidic residues).

Belongs to the CWC15 family.

In terms of biological role, involved in pre-mRNA splicing. The sequence is that of Protein CWC15 homolog (c12.1) from Drosophila melanogaster (Fruit fly).